We begin with the raw amino-acid sequence, 437 residues long: UDP-N-acetylmuramate--L-alanine ligase (437 aa).

ATP is bound at residue 114–120 (GTHGKTS).

This sequence belongs to the MurCDEF family.

The protein localises to the cytoplasm. The enzyme catalyses UDP-N-acetyl-alpha-D-muramate + L-alanine + ATP = UDP-N-acetyl-alpha-D-muramoyl-L-alanine + ADP + phosphate + H(+). It participates in cell wall biogenesis; peptidoglycan biosynthesis. Cell wall formation. In Lactobacillus gasseri (strain ATCC 33323 / DSM 20243 / BCRC 14619 / CIP 102991 / JCM 1131 / KCTC 3163 / NCIMB 11718 / NCTC 13722 / AM63), this protein is UDP-N-acetylmuramate--L-alanine ligase.